The chain runs to 894 residues: B-cell lymphoma/leukemia 11B (894 aa).

2 positions are modified to phosphoserine: serine 97 and serine 110. Threonine 120 bears the Phosphothreonine mark. Serine 129 bears the Phosphoserine mark. A Glycyl lysine isopeptide (Lys-Gly) (interchain with G-Cter in SUMO2) cross-link involves residue lysine 137. The segment at 221–251 (YICTTCKQPFNSAWFLLQHAQNTHGFRIYLE) adopts a C2H2-type 1 zinc-finger fold. Serine 256 is subject to Phosphoserine. Threonine 260 carries the post-translational modification Phosphothreonine. Serine 277 carries the phosphoserine modification. Arginine 293 is modified (omega-N-methylarginine). An Asymmetric dimethylarginine modification is found at arginine 322. Serine 358 carries the post-translational modification Phosphoserine. 2 disordered regions span residues 370–428 (LAGN…KSKS) and 471–583 (KRHM…GGGA). The residue at position 376 (threonine 376) is a Phosphothreonine. 3 positions are modified to phosphoserine: serine 381, serine 398, and serine 401. The span at 396–423 (QPSPKSPFLSTPPLPPMPPGGTPPPQPP) shows a compositional bias: pro residues. Phosphothreonine is present on residues threonine 406 and threonine 417. C2H2-type zinc fingers lie at residues 427 to 454 (KSCEFCGKTFKFQSNLIVHRRSHTGEKP) and 455 to 482 (YKCQLCDHACSQASKLKRHMKTHMHKAG). A compositionally biased stretch (basic residues) spans 471–480 (KRHMKTHMHK). Phosphoserine occurs at positions 483, 488, 496, and 497. A compositionally biased stretch (basic and acidic residues) spans 511-529 (KAADGDFRHHESDPSLGHE). The span at 530 to 546 (PEEEDEEEEEEEEELLL) shows a compositional bias: acidic residues. Gly residues predominate over residues 568–583 (NGGGGVPGVPGAGGGA). Glycyl lysine isopeptide (Lys-Gly) (interchain with G-Cter in SUMO2) cross-links involve residues lysine 591 and lysine 617. Residues 653 to 680 (GRGGGFAPGTEPFPGLFPRKPAPLPSPG) are disordered. Serine 678 is modified (phosphoserine). Glycyl lysine isopeptide (Lys-Gly) (interchain with G-Cter in SUMO2) cross-links involve residues lysine 686 and lysine 723. Residues 737 to 752 (FATSSEHSSENGSLRF) show a composition bias toward polar residues. Residues 737-794 (FATSSEHSSENGSLRFSTPPGDLLDGGLSGRSGTASGGSTPHLGGPGPGRPSSKEGRR) form a disordered region. The segment covering 753–775 (STPPGDLLDGGLSGRSGTASGGS) has biased composition (low complexity). Threonine 754 is modified (phosphothreonine). A phosphoserine mark is found at serine 765 and serine 772. C2H2-type zinc fingers lie at residues 796-823 (DTCEYCGKVFKNCSNLTVHRRSHTGERP), 824-853 (YKCELCNYACAQSSKLTRHMKTHGQIGKEV), and 854-884 (YRCDICQMPFSVYSTLEKHMKKWHGEHLLTN). The residue at position 851 (lysine 851) is an N6-acetyllysine. Lysine 887 is covalently cross-linked (Glycyl lysine isopeptide (Lys-Gly) (interchain with G-Cter in SUMO2)).

As to quaternary structure, interacts with TFCOUP1, SIRT1, ARP1 and EAR2. Interacts with EP300; the interaction is detected in activated T-lymphocytes, but not under resting conditions. Sumoylated with SUMO1. As to expression, highly expressed in brain and in malignant T-cell lines derived from patients with adult T-cell leukemia/lymphoma.

The protein resides in the nucleus. Its function is as follows. Key regulator of both differentiation and survival of T-lymphocytes during thymocyte development in mammals. Essential in controlling the responsiveness of hematopoietic stem cells to chemotactic signals by modulating the expression of the receptors CCR7 and CCR9, which direct the movement of progenitor cells from the bone marrow to the thymus. Is a regulator of IL2 promoter and enhances IL2 expression in activated CD4(+) T-lymphocytes. Tumor-suppressor that represses transcription through direct, TFCOUP2-independent binding to a GC-rich response element. May also function in the P53-signaling pathway. This Homo sapiens (Human) protein is B-cell lymphoma/leukemia 11B (BCL11B).